We begin with the raw amino-acid sequence, 290 residues long: 33 kDa chaperonin (290 aa).

Disulfide bonds link Cys231-Cys233 and Cys264-Cys267.

It belongs to the HSP33 family. Under oxidizing conditions two disulfide bonds are formed involving the reactive cysteines. Under reducing conditions zinc is bound to the reactive cysteines and the protein is inactive.

The protein localises to the cytoplasm. Redox regulated molecular chaperone. Protects both thermally unfolding and oxidatively damaged proteins from irreversible aggregation. Plays an important role in the bacterial defense system toward oxidative stress. The chain is 33 kDa chaperonin from Photorhabdus laumondii subsp. laumondii (strain DSM 15139 / CIP 105565 / TT01) (Photorhabdus luminescens subsp. laumondii).